A 698-amino-acid chain; its full sequence is Auxin response factor 22 (698 aa).

Positions 128 to 230 form a DNA-binding region, TF-B3; the sequence is FAKTLTQSDA…ELCVGIRRAK (103 aa). Polar residues predominate over residues 549–577; the sequence is TSSGSTETLSPGVTGNSSPNGNAHKTGNA. The segment at 549-579 is disordered; sequence TSSGSTETLSPGVTGNSSPNGNAHKTGNASD. Residues 603–683 enclose the PB1 domain; sequence AGHCKVFMES…RRLTIIAGDR (81 aa).

Belongs to the ARF family. Homodimers and heterodimers. In terms of tissue distribution, expressed in roots, culms, leaves and young panicles.

The protein resides in the nucleus. Functionally, auxin response factors (ARFs) are transcriptional factors that bind specifically to the DNA sequence 5'-TGTCTC-3' found in the auxin-responsive promoter elements (AuxREs). The protein is Auxin response factor 22 (ARF22) of Oryza sativa subsp. japonica (Rice).